The primary structure comprises 476 residues: WASH complex subunit 1 (476 aa).

Residues Met-1–Arg-54 form a required for WASH complex assembly region. Disordered regions lie at residues Ser-273–Asp-412 and Gly-427–Ser-476. Residues Thr-284 to Asp-296 are compositionally biased toward polar residues. Over residues Leu-302–Pro-333 the composition is skewed to pro residues. A VCA region spans residues Gln-354 to Ser-476. Positions Gly-366 to Val-388 constitute a WH2 domain. The segment covering Ser-387–Gln-403 has biased composition (basic and acidic residues). The span at Gly-467–Ser-476 shows a compositional bias: acidic residues.

This sequence belongs to the WASH1 family. In terms of assembly, component of the WASH complex.

The protein localises to the early endosome membrane. It is found in the recycling endosome membrane. Acts as a nucleation-promoting factor at the surface of endosomes, where it recruits and activates the Arp2/3 complex to induce actin polymerization, playing a key role in the fission of tubules that serve as transport intermediates during endosome sorting. This Gallus gallus (Chicken) protein is WASH complex subunit 1.